A 227-amino-acid chain; its full sequence is Protein FdhD (227 aa).

Residue 210-215 (FARNGK) coordinates Mo-bis(molybdopterin guanine dinucleotide).

This sequence belongs to the FdhD family.

It is found in the cytoplasm. In terms of biological role, required for formate dehydrogenase (FDH) activity. The polypeptide is Protein FdhD (Methanocaldococcus jannaschii (strain ATCC 43067 / DSM 2661 / JAL-1 / JCM 10045 / NBRC 100440) (Methanococcus jannaschii)).